The following is a 182-amino-acid chain: Orotate phosphoribosyltransferase (182 aa).

Residues Arg96, Lys97, Lys100, His102, and 122 to 130 (EDTSTTGGS) contribute to the 5-phospho-alpha-D-ribose 1-diphosphate site. 2 residues coordinate orotate: Thr126 and Arg154.

This sequence belongs to the purine/pyrimidine phosphoribosyltransferase family. PyrE subfamily. Homodimer. Requires Mg(2+) as cofactor.

The catalysed reaction is orotidine 5'-phosphate + diphosphate = orotate + 5-phospho-alpha-D-ribose 1-diphosphate. It functions in the pathway pyrimidine metabolism; UMP biosynthesis via de novo pathway; UMP from orotate: step 1/2. Functionally, catalyzes the transfer of a ribosyl phosphate group from 5-phosphoribose 1-diphosphate to orotate, leading to the formation of orotidine monophosphate (OMP). The protein is Orotate phosphoribosyltransferase of Streptomyces avermitilis (strain ATCC 31267 / DSM 46492 / JCM 5070 / NBRC 14893 / NCIMB 12804 / NRRL 8165 / MA-4680).